Here is a 41-residue protein sequence, read N- to C-terminus: Large ribosomal subunit protein bL36 (41 aa).

This sequence belongs to the bacterial ribosomal protein bL36 family.

In Rickettsia canadensis (strain McKiel), this protein is Large ribosomal subunit protein bL36.